A 55-amino-acid polypeptide reads, in one-letter code: Large ribosomal subunit protein bL33 (55 aa).

Belongs to the bacterial ribosomal protein bL33 family.

The chain is Large ribosomal subunit protein bL33 from Leifsonia xyli subsp. xyli (strain CTCB07).